We begin with the raw amino-acid sequence, 490 residues long: Cytochrome P450 monooxygenase anuE (490 aa).

Cys-405 provides a ligand contact to heme.

This sequence belongs to the cytochrome P450 family. Heme is required as a cofactor.

It carries out the reaction 2-hydroxymethyl-3-pentylphenol + reduced [NADPH--hemoprotein reductase] + O2 = (8S)-annullatin E + oxidized [NADPH--hemoprotein reductase] + H2O + H(+). It participates in secondary metabolite biosynthesis. Functionally, cytochrome P450 monooxygenase; part of the gene cluster that mediates the biosynthesis of annullatin D, an alkylated aromatic polyketide with a fused dihydrobenzofuran lactone ring system that exhibits potent agonistic activities toward the cannabinoid receptors. Within the pathway, anuE catalyzes the hydroxylation of 2-hydroxymethyl-3-pentylphenol at the side chain to produce (8S)-annullatin E. The annullatin backbone 2-hydroxymethyl-3-pentylphenol is assembled from one acetyl-CoA starter unit and 5 malonyl-CoA elongation units by cooperation of the highly reducing polyketide synthase anuA, the short-chain dehydrogenase anuB and the oxidoreductase anuC, before being hydroxylated at the C-5 alkyl chain by the cytochrome P450 monooxygenase anuE to form (8S)-annullatin E. The prenyltransferase anuH subsequently installs one isoprenyl group at the benzene ring to form (8S)-annullatin J. Enzymatic or nonenzymatic dihydro-benzofuran ring formation between the prenyl and the phenolic hydroxyl groups in (8S)-annullatin J results in two diastereomers (2S,9S)-annullatin H and compound 12. The intermediate (2S,9S)-annullatin H is then converted to (2S,9S)-annullatin D by the FAD-linked oxidoreductase anuG-catalyzed five-member lactone ring formation. The isomer 12 acts as a substrate for the short-chain dehydrogenase anuF and is oxidized to (2R)-annullatin F, which is subsequently acetylated by an acetyltransferase leading to (2R)-annullatin G formation. The remaining enzymes identified within the cluster, anuD, anuI and anuJ, seem not to be involved in annullatin biosynthesis. The chain is Cytochrome P450 monooxygenase anuE from Penicillium roqueforti (strain FM164).